Here is a 447-residue protein sequence, read N- to C-terminus: Tubulin beta-1 chain (447 aa).

Positions 11, 69, 138, 142, 143, 144, 204, and 226 each coordinate GTP. Position 69 (Glu-69) interacts with Mg(2+). The segment covering 411-427 has biased composition (polar residues); sequence AESNMNDLVSEYQQYQD. A disordered region spans residues 411-447; it reads AESNMNDLVSEYQQYQDATADEEGDYEDEEEQVPEDE. The segment covering 429 to 447 has biased composition (acidic residues); sequence TADEEGDYEDEEEQVPEDE.

Belongs to the tubulin family. As to quaternary structure, dimer of alpha and beta chains. A typical microtubule is a hollow water-filled tube with an outer diameter of 25 nm and an inner diameter of 15 nM. Alpha-beta heterodimers associate head-to-tail to form protofilaments running lengthwise along the microtubule wall with the beta-tubulin subunit facing the microtubule plus end conferring a structural polarity. Microtubules usually have 13 protofilaments but different protofilament numbers can be found in some organisms and specialized cells. The cofactor is Mg(2+). In terms of tissue distribution, expressed in leaf sheaths.

It is found in the cytoplasm. The protein localises to the cytoskeleton. In terms of biological role, tubulin is the major constituent of microtubules, a cylinder consisting of laterally associated linear protofilaments composed of alpha- and beta-tubulin heterodimers. Microtubules grow by the addition of GTP-tubulin dimers to the microtubule end, where a stabilizing cap forms. Below the cap, tubulin dimers are in GDP-bound state, owing to GTPase activity of alpha-tubulin. The polypeptide is Tubulin beta-1 chain (TUBB1) (Oryza sativa subsp. japonica (Rice)).